The primary structure comprises 1176 residues: Translation initiation factor IF-2 (1176 aa).

Composition is skewed to low complexity over residues 32–44 (IAAK…ISDS), 57–79 (ASPS…AGKS), 94–166 (APVA…AAPS), and 193–235 (KPTP…VKPT). Disordered stretches follow at residues 32–502 (IAAK…QRQK) and 535–567 (RPAK…RQRR). A compositionally biased stretch (pro residues) spans 251–270 (APPPASTPRPAPSRPTPRPA). 2 stretches are compositionally biased toward low complexity: residues 388–409 (GRPG…GGMR) and 439–469 (NRPT…FRPG). Basic and acidic residues predominate over residues 478 to 492 (GRPDWDDSAKLEALR). Residues 553 to 567 (VRKRRKETARQRQRR) show a composition bias toward basic residues. Residues 668 to 840 (RRPPVVTVMG…LLLVTEVEDL (173 aa)) enclose the tr-type G domain. A G1 region spans residues 677–684 (GHVDHGKT). A GTP-binding site is contributed by 677 to 684 (GHVDHGKT). The interval 702-706 (GITQH) is G2. Positions 727-730 (DTPG) are G3. GTP contacts are provided by residues 727-731 (DTPGH) and 781-784 (NKID). The G4 stretch occupies residues 781 to 784 (NKID). Positions 817-819 (SAI) are G5.

Belongs to the TRAFAC class translation factor GTPase superfamily. Classic translation factor GTPase family. IF-2 subfamily.

The protein localises to the cytoplasm. Functionally, one of the essential components for the initiation of protein synthesis. Protects formylmethionyl-tRNA from spontaneous hydrolysis and promotes its binding to the 30S ribosomal subunits. Also involved in the hydrolysis of GTP during the formation of the 70S ribosomal complex. The protein is Translation initiation factor IF-2 of Synechococcus sp. (strain CC9902).